The primary structure comprises 609 residues: Protein NRT1/ PTR FAMILY 7.1 (609 aa).

Transmembrane regions (helical) follow at residues 67-87 (IILL…GVNL) and 109-129 (WTGT…SYWG). A Phosphothreonine modification is found at Thr133. 10 helical membrane passes run 136 to 156 (IFQV…WFFL), 173 to 193 (SSLG…GYGG), 216 to 236 (FFSY…TILV), 243 to 263 (LWTE…VAFL), 367 to 387 (PIWL…SLFV), 402 to 422 (IPAA…TGIY), 438 to 458 (MGIG…TEIQ), 474 to 494 (ILWQ…MYVG), 516 to 536 (MASM…VMAI), and 559 to 579 (FYFL…IFAK).

It belongs to the major facilitator superfamily. Proton-dependent oligopeptide transporter (POT/PTR) (TC 2.A.17) family. Expressed in flowers.

The protein localises to the membrane. This is Protein NRT1/ PTR FAMILY 7.1 (NPF7.1) from Arabidopsis thaliana (Mouse-ear cress).